We begin with the raw amino-acid sequence, 490 residues long: Tektin-3 (490 aa).

O-linked (GalNAc...) threonine glycosylation is found at T7, T9, and T11. N41, N86, N111, and N276 each carry an N-linked (GlcNAc...) asparagine glycan. A coiled-coil region spans residues M415 to V461.

Belongs to the tektin family. As to quaternary structure, microtubule inner protein component of sperm flagellar doublet microtubules. Interacts with TEKT1, TEKT2, TEKT4 and TEKT5. Interacts with CCDC38. In terms of processing, N- and O-glycosylated. Ubiquitinated, leading to its degradation. Deubiquitinated by USP16, promoting its stability. Post-translationally, may be proteolytically processed during the epididymal transit of spermatozoa. In terms of tissue distribution, expressed preferentially in testis. Expressed predominantly in late pachytene spermatocytes and early round spermatids. Expressed in spermatozoa.

The protein localises to the cytoplasm. It localises to the cytoskeleton. Its subcellular location is the cilium axoneme. It is found in the flagellum axoneme. The protein resides in the cytoplasmic vesicle. The protein localises to the secretory vesicle. It localises to the acrosome outer membrane. Microtubule inner protein (MIP) part of the dynein-decorated doublet microtubules (DMTs) in cilia and flagellar axoneme. Forms filamentous polymers in the walls of ciliary and flagellar microtubules. Required for normal sperm mobility. The polypeptide is Tektin-3 (Tekt3) (Mus musculus (Mouse)).